The following is a 253-amino-acid chain: Sulfoacetaldehyde reductase (253 aa).

Phe-6–Val-30 contributes to the NADP(+) binding site. A substrate-binding site is contributed by Ser-139. The Proton acceptor role is filled by Tyr-152.

This sequence belongs to the short-chain dehydrogenases/reductases (SDR) family. As to quaternary structure, homodimer and heterotetramer.

It catalyses the reaction 2-hydroxyethane-1-sulfonate + NADP(+) = sulfoacetaldehyde + NADPH + H(+). The protein operates within organosulfur degradation. Its function is as follows. Catalyzes the formation of isethionate from 2-sulfoacetaldehyde in the deaminative pathway of taurine. The enzyme is specific for NADPH; NADH is not a substrate. Responsible for most of the activity observed in taurine-grown cells. This chain is Sulfoacetaldehyde reductase (isfD), found in Chromohalobacter salexigens (strain ATCC BAA-138 / DSM 3043 / CIP 106854 / NCIMB 13768 / 1H11).